The following is a 299-amino-acid chain: Syntenin-1 (299 aa).

Serine 2 is subject to N-acetylserine. The interval 2–103 is interaction with PDCD6IP; that stretch reads SLYPSLEDLK…VAPVTGNDAG (102 aa). 3 short sequence motifs (LYPX(n)L motif) span residues 3 to 7, 46 to 50, and 50 to 54; these read LYPSL, LYPKL, and LYPEL. A Phosphoserine modification is found at serine 6. Tyrosine 47 carries the post-translational modification Phosphotyrosine. PDZ domains follow at residues 115-194 and 199-273; these read EVIL…IRDR and TVTM…IMPT. 251–252 is an a 1,2-diacyl-sn-glycero-3-phospho-(1D-myo-inositol-4,5-bisphosphate) binding site; the sequence is KD.

In terms of assembly, monomer and homodimer. Interacts with SDC1, SDC2, SDC3, SDC4, NRXN2, EPHA7, EPHB1, NF2 isoform 1, TGFA, IL5RA, NFASC, SDCBP2 and PTPRJ. Interacts with PDCD6IP. Forms a complex with PDCD6IP and SDC2. Interacts (via C-terminus) with TGFBR1. Binds to FZD7; this interaction is increased by inositol trisphosphate (IP3). Interacts with SMO. In terms of processing, phosphorylated on tyrosine residues.

It localises to the cell junction. It is found in the focal adhesion. The protein localises to the adherens junction. The protein resides in the cell membrane. Its subcellular location is the endoplasmic reticulum membrane. It localises to the nucleus. It is found in the melanosome. The protein localises to the cytoplasm. The protein resides in the cytosol. Its subcellular location is the cytoskeleton. It localises to the secreted. It is found in the extracellular exosome. The protein localises to the membrane raft. Functionally, multifunctional adapter protein involved in diverse array of functions including trafficking of transmembrane proteins, neuro and immunomodulation, exosome biogenesis, and tumorigenesis. Positively regulates TGFB1-mediated SMAD2/3 activation and TGFB1-induced epithelial-to-mesenchymal transition (EMT) and cell migration in various cell types. May increase TGFB1 signaling by enhancing cell-surface expression of TGFR1 by preventing the interaction between TGFR1 and CAV1 and subsequent CAV1-dependent internalization and degradation of TGFR1. In concert with SDC1/4 and PDCD6IP, regulates exosome biogenesis. Regulates migration, growth, proliferation, and cell cycle progression in a variety of cancer types. In adherens junctions may function to couple syndecans to cytoskeletal proteins or signaling components. Seems to couple transcription factor SOX4 to the IL-5 receptor (IL5RA). May also play a role in vesicular trafficking. Seems to be required for the targeting of TGFA to the cell surface in the early secretory pathway. The polypeptide is Syntenin-1 (Sdcbp) (Mus musculus (Mouse)).